The primary structure comprises 325 residues: Inactive S-adenosylmethionine decarboxylase prozyme (325 aa).

It belongs to the eukaryotic AdoMetDC family. As to quaternary structure, forms a heterodimer with S-adenosylmethionine decarboxylase AdoMetDC; heterodimerization is required to activate AdoMetDC.

The protein operates within amine and polyamine biosynthesis; S-adenosylmethioninamine biosynthesis; S-adenosylmethioninamine from S-adenosyl-L-methionine: step 1/1. Functionally, probably has no catalytic activity due to the loss of several residues required for processing and catalysis. Forms a complex with S-adenosylmethionine decarboxylase AdoMetDC which is essential to activate AdoMetDC. Required for the biosynthesis of the polyamine spermidine. Required for growth and survival during the bloodstream life cycle stage. The polypeptide is Inactive S-adenosylmethionine decarboxylase prozyme (Trypanosoma brucei brucei).